A 136-amino-acid chain; its full sequence is Large-conductance mechanosensitive channel (136 aa).

Transmembrane regions (helical) follow at residues 15–35, 38–58, and 80–100; these read IDLAIGVIIGGAFGSLVNSIV, IFMPIIGLITGGIDFSNMFIQ, and GHFITLLINFLIIAWVLFFFV.

This sequence belongs to the MscL family. In terms of assembly, homopentamer.

Its subcellular location is the cell inner membrane. In terms of biological role, channel that opens in response to stretch forces in the membrane lipid bilayer. May participate in the regulation of osmotic pressure changes within the cell. In Bartonella tribocorum (strain CIP 105476 / IBS 506), this protein is Large-conductance mechanosensitive channel.